The chain runs to 925 residues: Calpain-B (925 aa).

Residues Met-259 to Ser-558 form the Calpain catalytic domain. Active-site residues include Cys-314, His-470, and Asn-498. Residues Pro-559–Asp-728 are domain III. Residues Met-723–Asp-753 are disordered. Residues Glu-729–Pro-748 form a linker region. The domain IV stretch occupies residues Lys-749–Ser-925. 2 consecutive EF-hand domains span residues Phe-796–Trp-831 and Thr-826–His-861. Residues Asp-809, Asp-811, Ser-813, Arg-815, Glu-820, Asp-839, Thr-843, Ser-845, and His-850 each coordinate Ca(2+).

The protein belongs to the peptidase C2 family. Undergoes calcium-dependent autolytic cleavage between Asn-74 and Ala-75 and between Gln-224 and Asn-225 to produce two major products, calpain B catalytic subunit 1 and calpain B catalytic subunit 2. This autolysis is necessary for activation of the protein. As to expression, strongly expressed in follicular and border cells of the oocyte. Ubiquitously expressed in early embryos. Localized to the trachea and their orifices, and to the larynx of late embryos. Restricted to the salivary gland in third instar larvae.

The protein localises to the cytoplasm. It localises to the membrane. Activated by millimolar concentrations of calcium. Calcium-regulated non-lysosomal thiol-protease. This chain is Calpain-B, found in Drosophila melanogaster (Fruit fly).